Consider the following 72-residue polypeptide: 3-deoxy-manno-octulosonate cytidylyltransferase (72 aa).

Belongs to the KdsB family. Homodimer.

The protein resides in the cytoplasm. The catalysed reaction is 3-deoxy-alpha-D-manno-oct-2-ulosonate + CTP = CMP-3-deoxy-beta-D-manno-octulosonate + diphosphate. The protein operates within nucleotide-sugar biosynthesis; CMP-3-deoxy-D-manno-octulosonate biosynthesis; CMP-3-deoxy-D-manno-octulosonate from 3-deoxy-D-manno-octulosonate and CTP: step 1/1. Its pathway is bacterial outer membrane biogenesis; lipopolysaccharide biosynthesis. Its function is as follows. Activates KDO (a required 8-carbon sugar) for incorporation into bacterial lipopolysaccharide in Gram-negative bacteria. This chain is 3-deoxy-manno-octulosonate cytidylyltransferase (kpsU), found in Escherichia coli.